We begin with the raw amino-acid sequence, 340 residues long: Cell growth-regulated gene 1 protein (340 aa).

Belongs to the SMP-30/CGR1 family.

Functionally, involved in the cell growth regulation. This Candida albicans (strain SC5314 / ATCC MYA-2876) (Yeast) protein is Cell growth-regulated gene 1 protein (CGR1).